A 163-amino-acid chain; its full sequence is Large ribosomal subunit protein uL10 (163 aa).

It belongs to the universal ribosomal protein uL10 family. As to quaternary structure, part of the ribosomal stalk of the 50S ribosomal subunit. The N-terminus interacts with L11 and the large rRNA to form the base of the stalk. The C-terminus forms an elongated spine to which L12 dimers bind in a sequential fashion forming a multimeric L10(L12)X complex.

Forms part of the ribosomal stalk, playing a central role in the interaction of the ribosome with GTP-bound translation factors. This is Large ribosomal subunit protein uL10 from Blochmanniella pennsylvanica (strain BPEN).